Reading from the N-terminus, the 247-residue chain is tRNA pseudouridine synthase A (247 aa).

Residue Asp52 is the Nucleophile of the active site. Residue Tyr113 coordinates substrate.

It belongs to the tRNA pseudouridine synthase TruA family. As to quaternary structure, homodimer.

It carries out the reaction uridine(38/39/40) in tRNA = pseudouridine(38/39/40) in tRNA. Functionally, formation of pseudouridine at positions 38, 39 and 40 in the anticodon stem and loop of transfer RNAs. This chain is tRNA pseudouridine synthase A, found in Sinorhizobium fredii (strain NBRC 101917 / NGR234).